A 141-amino-acid chain; its full sequence is Albumin-8 (141 aa).

Residues 1–25 form the signal peptide; the sequence is MARFSIVFAAAGVLLLVAMAPVSEA. Positions 26–38 are excised as a propeptide; the sequence is STTTIITTIIEEN. 4 disulfide bridges follow: Cys-49-Cys-100, Cys-62-Cys-89, Cys-90-Cys-132, and Cys-102-Cys-139.

It belongs to the 2S seed storage albumins family. In terms of assembly, heterodimer; disulfide-linked.

This is a 2S seed storage protein. This Helianthus annuus (Common sunflower) protein is Albumin-8.